We begin with the raw amino-acid sequence, 331 residues long: 3-dehydroquinate synthase homolog (331 aa).

The protein belongs to the archaeal-type DHQ synthase family.

This Aquifex aeolicus (strain VF5) protein is 3-dehydroquinate synthase homolog.